We begin with the raw amino-acid sequence, 281 residues long: NAD-dependent protein deacetylase 3 (281 aa).

Positions 1–281 constitute a Deacetylase sirtuin-type domain; the sequence is MLDSPTLDLL…PWLAEQLITR (281 aa). Residues 27–47 and 105–108 each bind NAD(+); these read GAGI…GVRR and QNVD. Catalysis depends on histidine 123, which acts as the Proton acceptor. Zn(2+) is bound by residues cysteine 131, cysteine 134, cysteine 182, and cysteine 185. Residues 223-225, 249-251, and cysteine 267 contribute to the NAD(+) site; these read GTS and NHG.

It belongs to the sirtuin family. Class II subfamily. It depends on Zn(2+) as a cofactor.

The protein localises to the cytoplasm. It carries out the reaction N(6)-acetyl-L-lysyl-[protein] + NAD(+) + H2O = 2''-O-acetyl-ADP-D-ribose + nicotinamide + L-lysyl-[protein]. NAD-dependent protein deacetylase which modulates the activities of several enzymes which are inactive in their acetylated form. The protein is NAD-dependent protein deacetylase 3 of Pseudomonas syringae pv. tomato (strain ATCC BAA-871 / DC3000).